Here is a 198-residue protein sequence, read N- to C-terminus: Recombination protein RecR (198 aa).

The C4-type zinc finger occupies 57 to 72; the sequence is CSVCGHITENDPCYIC. Positions 80 to 175 constitute a Toprim domain; that stretch reads SVICVVEDDK…KVTRLAQGLS (96 aa).

This sequence belongs to the RecR family.

May play a role in DNA repair. It seems to be involved in an RecBC-independent recombinational process of DNA repair. It may act with RecF and RecO. This chain is Recombination protein RecR, found in Staphylococcus epidermidis (strain ATCC 35984 / DSM 28319 / BCRC 17069 / CCUG 31568 / BM 3577 / RP62A).